We begin with the raw amino-acid sequence, 287 residues long: Orotidine 5'-phosphate decarboxylase (287 aa).

Lys95 serves as the catalytic Proton donor.

Belongs to the OMP decarboxylase family. Type 2 subfamily.

The enzyme catalyses orotidine 5'-phosphate + H(+) = UMP + CO2. It participates in pyrimidine metabolism; UMP biosynthesis via de novo pathway; UMP from orotate: step 2/2. This is Orotidine 5'-phosphate decarboxylase from Albidiferax ferrireducens (strain ATCC BAA-621 / DSM 15236 / T118) (Rhodoferax ferrireducens).